Here is a 289-residue protein sequence, read N- to C-terminus: 4-diphosphocytidyl-2-C-methyl-D-erythritol kinase (289 aa).

Lys11 is an active-site residue. 93–103 (PLAAGLAGGSA) contributes to the ATP binding site. Asp135 is a catalytic residue.

It belongs to the GHMP kinase family. IspE subfamily.

It carries out the reaction 4-CDP-2-C-methyl-D-erythritol + ATP = 4-CDP-2-C-methyl-D-erythritol 2-phosphate + ADP + H(+). It functions in the pathway isoprenoid biosynthesis; isopentenyl diphosphate biosynthesis via DXP pathway; isopentenyl diphosphate from 1-deoxy-D-xylulose 5-phosphate: step 3/6. Its function is as follows. Catalyzes the phosphorylation of the position 2 hydroxy group of 4-diphosphocytidyl-2C-methyl-D-erythritol. In Thermoanaerobacter pseudethanolicus (strain ATCC 33223 / 39E) (Clostridium thermohydrosulfuricum), this protein is 4-diphosphocytidyl-2-C-methyl-D-erythritol kinase.